Reading from the N-terminus, the 448-residue chain is Probable 3-ketoacyl-CoA thiolase (448 aa).

The active-site Acyl-thioester intermediate is C110. Residues H402 and C432 each act as proton acceptor in the active site.

This sequence belongs to the thiolase-like superfamily. Thiolase family.

Its subcellular location is the mitochondrion. The catalysed reaction is an acyl-CoA + acetyl-CoA = a 3-oxoacyl-CoA + CoA. It functions in the pathway lipid metabolism; fatty acid beta-oxidation. Functionally, mitochondrial enzyme that catalyzes reactions of the mitochondrial beta-oxidation pathway. This chain is Probable 3-ketoacyl-CoA thiolase, found in Caenorhabditis elegans.